The sequence spans 1000 residues: C-module-binding factor A (1000 aa).

Residues proline 113 to threonine 280 enclose the JmjC domain. The PHD-type; atypical zinc finger occupies lysine 489–leucine 544. The RING-type; degenerate zinc-finger motif lies at cysteine 492–lysine 542. Disordered regions lie at residues arginine 561–serine 647 and serine 660–lysine 818. Low complexity-rich tracts occupy residues asparagine 574 to serine 647, serine 660 to asparagine 683, serine 700 to serine 710, asparagine 732 to histidine 751, and asparagine 760 to threonine 789. Residues aspartate 805–lysine 818 are compositionally biased toward basic and acidic residues. Residues lysine 810–lysine 818 constitute a DNA-binding region (a.T hook).

Monomer.

The protein resides in the nucleus. Transcriptional regulator involved in phagocytosis and pinocytosis. Both activates and represses transcription. Regulates expression of acaA, carA, pkaC, csaA, cotB and lagC. Promotes amplification of the tRNA gene-associated retrotransposon TRE5-A, a mobile genetic element formerly called as Dictyostelium repetitive element (DRE). Suppresses agnC and agnE encoding argonaute proteins which are part of a RNA interference pathway controlling TRE5-A amplification. Required for amplification of both sense and antisense RNA transcripts, but does not activate their promoters found in A-module and C-module of the TRE5-A, respectively. Nevertheless, binds to distinct DNA sequences containing A and T stretches within the C-module in vitro. This Dictyostelium discoideum (Social amoeba) protein is C-module-binding factor A.